Reading from the N-terminus, the 126-residue chain is Protein ApaG (126 aa).

Residues 2–126 (TELETSIKID…FRLSIPGLLH (125 aa)) enclose the ApaG domain.

The sequence is that of Protein ApaG from Shewanella woodyi (strain ATCC 51908 / MS32).